A 528-amino-acid chain; its full sequence is MLSFKFAKSASKVIGNRNFHSSSASLANTTKLFINGKFVESKTKEWLEVRNPATQELVTKVPVSTKEEMEAAVKAASDAFPAWRDTSVSNRSRIISNYKNLINKNMDKIAAIITEEQGKTLPDAKGDVFRGLEVVEHSVNVASLMMGETVENVSKNVDIYSYVQPLGVCAGITPFNFPAMIPLWMFPLAIACGNTFVLKPSERVPSASMFLVQLAQEAGVPDGVVNVIHGGKEAVNFICDAPEVRAISFVGADQAGRHIHARGTANGKRVQSNMAAKNHATIVPDAHKERTLDALTGAAFGASGQRCMALSAAVFVGESKNWIPELAERAKKLKVAGGAAPGADLGPVISAASKQRIHELIQSGIDEGAKCILDGRNVVVDPEFSKGNFVGPTILTDVKPHMRCYKEEIFGPVLVCLNVDTVDQAIQLINANPYGNGTAVFTSSGAVARKYQREIDVGQVGINLPIPVPLPFFSFTGSRGSFVGAGHFYGKTGVQFFTQIKTITSNWRDDDISHGVSSSMNMPILGKN.

Residues 1–26 constitute a mitochondrion transit peptide; it reads MLSFKFAKSASKVIGNRNFHSSSASL. Positions 175, 199, 202, and 203 each coordinate NAD(+). The Nucleophile role is filled by Cys307. Glu408 contacts NAD(+).

This sequence belongs to the aldehyde dehydrogenase family. In terms of assembly, homotetramer.

The protein localises to the mitochondrion. The enzyme catalyses 2-methyl-3-oxopropanoate + NAD(+) + CoA + H2O = propanoyl-CoA + hydrogencarbonate + NADH + H(+). It catalyses the reaction 3-oxopropanoate + NAD(+) + CoA + H2O = hydrogencarbonate + acetyl-CoA + NADH + H(+). Probable malonate and methylmalonate semialdehyde dehydrogenase involved in the catabolism of valine, thymine, and compounds catabolized by way of beta-alanine, including uracil and cytidine. The polypeptide is Probable methylmalonate-semialdehyde/malonate-semialdehyde dehydrogenase [acylating], mitochondrial (mmsdh) (Dictyostelium discoideum (Social amoeba)).